The sequence spans 254 residues: Serotonin N-acetyltransferase 1, chloroplastic (254 aa).

The N-terminal 83 residues, 1–83 (MASAASASAS…NSTETVEPPS (83 aa)), are a transit peptide targeting the chloroplast. Residues 119–254 (VNVYDLQALC…IKGMFWYPRF (136 aa)) form the N-acetyltransferase domain.

The protein resides in the plastid. It localises to the chloroplast. It is found in the nucleus. It carries out the reaction a 2-arylethylamine + acetyl-CoA = an N-acetyl-2-arylethylamine + CoA + H(+). Its pathway is aromatic compound metabolism; melatonin biosynthesis; melatonin from serotonin: step 1/2. In terms of biological role, catalyzes the N-acetylation of serotonin into N-acetylserotonin, the penultimate step in the synthesis of melatonin. Catalyzes in vitro the N-acetylation of tryptamine to produce N-acetyltryptamine, 5-methoxytryptamine to produce melatonin and tyramine to produce N-acetyltyramine. Acetyltransferase required for geminivirus infection and systemic spread. The polypeptide is Serotonin N-acetyltransferase 1, chloroplastic (Oryza sativa subsp. indica (Rice)).